A 229-amino-acid polypeptide reads, in one-letter code: Phosphoglycolate phosphatase (229 aa).

Asp18 functions as the Nucleophile in the catalytic mechanism. Mg(2+) is bound by residues Asp18, Asp20, and Asp176.

This sequence belongs to the HAD-like hydrolase superfamily. CbbY/CbbZ/Gph/YieH family. It depends on Mg(2+) as a cofactor.

The catalysed reaction is 2-phosphoglycolate + H2O = glycolate + phosphate. Its pathway is organic acid metabolism; glycolate biosynthesis; glycolate from 2-phosphoglycolate: step 1/1. Functionally, specifically catalyzes the dephosphorylation of 2-phosphoglycolate. Is involved in the dissimilation of the intracellular 2-phosphoglycolate formed during the DNA repair of 3'-phosphoglycolate ends, a major class of DNA lesions induced by oxidative stress. The sequence is that of Phosphoglycolate phosphatase from Xylella fastidiosa (strain 9a5c).